Consider the following 161-residue polypeptide: Spermidine N(1)-acetyltransferase (161 aa).

Residues isoleucine 3–glutamate 160 enclose the N-acetyltransferase domain. Residues leucine 92–leucine 94, threonine 99–glycine 104, asparagine 131, and serine 136 each bind acetyl-CoA. Tyrosine 138 serves as the catalytic Proton donor. Lysine 140 contributes to the acetyl-CoA binding site.

This sequence belongs to the acetyltransferase family. As to quaternary structure, monomer or homodimer.

The enzyme catalyses an alkane-alpha,omega-diamine + acetyl-CoA = an N-acetylalkane-alpha,omega-diamine + CoA + H(+). Its function is as follows. Involved in the protection against polyamine toxicity by regulating their concentration. Could also be involved in the negative control of sporulation as well as production of degradative enzymes such as alpha-amylase, levansucrase and alkaline phosphatase. Catalyzes the transfer of an acetyl group from acetyl coenzyme A (AcCoA) to an acceptor substrate and release both CoA and the acetylated product. It can use a variety of substrates including spermidine, L-tryptophan, L-leucine, L-lysine, dopamine and tyramine. This Thermoplasma acidophilum (strain ATCC 25905 / DSM 1728 / JCM 9062 / NBRC 15155 / AMRC-C165) protein is Spermidine N(1)-acetyltransferase.